The following is a 319-amino-acid chain: tRNA(Ile)-lysidine synthase (319 aa).

32–37 (SGGSDS) serves as a coordination point for ATP.

This sequence belongs to the tRNA(Ile)-lysidine synthase family.

It localises to the cytoplasm. The enzyme catalyses cytidine(34) in tRNA(Ile2) + L-lysine + ATP = lysidine(34) in tRNA(Ile2) + AMP + diphosphate + H(+). Its function is as follows. Ligates lysine onto the cytidine present at position 34 of the AUA codon-specific tRNA(Ile) that contains the anticodon CAU, in an ATP-dependent manner. Cytidine is converted to lysidine, thus changing the amino acid specificity of the tRNA from methionine to isoleucine. The polypeptide is tRNA(Ile)-lysidine synthase (Chlamydia pneumoniae (Chlamydophila pneumoniae)).